The sequence spans 270 residues: 4-hydroxy-tetrahydrodipicolinate reductase (270 aa).

Residues 8 to 13 (GALGRM), Asp34, 102 to 104 (GTT), and 128 to 131 (SQNY) contribute to the NAD(+) site. Residue His160 is the Proton donor/acceptor of the active site. His161 contacts (S)-2,3,4,5-tetrahydrodipicolinate. The active-site Proton donor is the Lys164. 170 to 171 (GT) is a (S)-2,3,4,5-tetrahydrodipicolinate binding site.

This sequence belongs to the DapB family.

The protein localises to the cytoplasm. The enzyme catalyses (S)-2,3,4,5-tetrahydrodipicolinate + NAD(+) + H2O = (2S,4S)-4-hydroxy-2,3,4,5-tetrahydrodipicolinate + NADH + H(+). It carries out the reaction (S)-2,3,4,5-tetrahydrodipicolinate + NADP(+) + H2O = (2S,4S)-4-hydroxy-2,3,4,5-tetrahydrodipicolinate + NADPH + H(+). It participates in amino-acid biosynthesis; L-lysine biosynthesis via DAP pathway; (S)-tetrahydrodipicolinate from L-aspartate: step 4/4. In terms of biological role, catalyzes the conversion of 4-hydroxy-tetrahydrodipicolinate (HTPA) to tetrahydrodipicolinate. The polypeptide is 4-hydroxy-tetrahydrodipicolinate reductase (Methanococcus maripaludis (strain DSM 14266 / JCM 13030 / NBRC 101832 / S2 / LL)).